The primary structure comprises 292 residues: Selenate reductase subunit B (292 aa).

The tat-type signal signal peptide spans 1–43 (MGSKETKNTSRRDFLIKGAGAAALGAGAFAISQVPLLEKLASA). 4Fe-4S ferredoxin-type domains follow at residues 84–113 (WIMVIDLKKCVGCSSCTVACVSENVLPPGV), 129–160 (VTKKFTPRPCMQCEHPPCTKVCPIGATYKSED), and 161–190 (GIVAIDYDKCIGCRYCITACPYGARTFDWG). The [4Fe-4S] cluster site is built by C93, C96, C99, C103, C138, C141, C146, C150, C170, C173, C176, C180, C230, C233, C245, and C249.

As to quaternary structure, the complex is composed of three subunits: SrdA, SrdB and SrdC. Requires [4Fe-4S] cluster as cofactor. In terms of processing, predicted to be exported by the Tat system. The position of the signal peptide cleavage has not been experimentally proven.

Its subcellular location is the secreted. It catalyses the reaction selenite + a quinone + H2O = selenate + a quinol. Component of the respiratory selenate reductase complex, which catalyzes the reduction of selenate to selenite. This subunit probably transfers electrons from SrdC to SrdA. This chain is Selenate reductase subunit B, found in Mesobacillus selenatarsenatis (strain DSM 18680 / JCM 14380 / FERM P-15431 / SF-1).